The following is a 210-amino-acid chain: Stress-response A/B barrel domain-containing protein DABB1 (210 aa).

Stress-response A/B barrel domains follow at residues Val5 to Trp100 and Ile116 to Phe204.

Homodimer.

The protein resides in the cytoplasm. It is found in the cytosol. In terms of biological role, involved in defense against fungal pathogens. Possesses antifungal activity against diverse pathogenic fungi. In Arabidopsis thaliana (Mouse-ear cress), this protein is Stress-response A/B barrel domain-containing protein DABB1.